We begin with the raw amino-acid sequence, 385 residues long: Spindle pole component BBP1 (385 aa).

Position 29 is a phosphoserine (S29). Over residues 34 to 48 (YKDQEERRDRSRYAQ) the composition is skewed to basic and acidic residues. The segment at 34–76 (YKDQEERRDRSRYAQDDTNFSMKFGNDSNRRSTNLSRSNSWSG) is disordered. Residues 64 to 75 (RSTNLSRSNSWS) are compositionally biased toward low complexity. Phosphoserine occurs at positions 73 and 115. Residues 229–355 (QMDLNSRDLE…KDMQRDNYES (127 aa)) adopt a coiled-coil conformation.

Belongs to the BBP1 family. In terms of assembly, homodimer. Interacts with KAR1, MPS2 and SPC29.

Its subcellular location is the cytoplasm. The protein localises to the cytoskeleton. The protein resides in the microtubule organizing center. It localises to the spindle pole body. Component of the spindle pole body (SPB) required for insertion of the nascent SPB into the nuclear envelope and for the proper execution of spindle pole body (SPB) duplication. Connects the central plaque of the SPB with the half-bridge. Required for proper localization of CDC5 at the SPB and for proper M-phase progression. The sequence is that of Spindle pole component BBP1 (BBP1) from Saccharomyces cerevisiae (strain ATCC 204508 / S288c) (Baker's yeast).